Consider the following 1187-residue polypeptide: BAI1-associated protein 3 (1187 aa).

A disordered region spans residues 55–81 (SFRRRTEQDPGSASADPQEPATGAWKP). The C2 1 domain maps to 176-335 (SLEEHTEAIE…VKSARANGTA (160 aa)). Ca(2+) contacts are provided by Asp-211, Asp-217, Asp-295, and Asp-297. The 122-residue stretch at 663-784 (FELYLTLADL…EATLFYTELL (122 aa)) folds into the MHD1 domain. Residues 888 to 996 (DEAVAPLMKY…CSTRECIEQF (109 aa)) enclose the MHD2 domain. One can recognise a C2 2 domain in the interval 1010 to 1136 (RFGRLSVRCH…GVARPQVGGG (127 aa)). 7 residues coordinate Ca(2+): Leu-1040, Asp-1041, Asp-1047, Asp-1105, Asp-1107, Ser-1110, and Asp-1113.

This sequence belongs to the unc-13 family. Interacts with ADGRB1; this interaction is direct. Interacts with endosomal SNARE proteins VAMP3, VAMP4, STX6 and STX16; this interaction is increased in the presence of calcium. Ca(2+) serves as cofactor. As to expression, predominantly expressed in brain. Also expressed in nonneural tissues such as breast and testes epithelium.

The protein localises to the cytoplasm. Its subcellular location is the cytosol. It is found in the recycling endosome membrane. It localises to the late endosome membrane. The protein resides in the golgi apparatus. The protein localises to the trans-Golgi network membrane. Its subcellular location is the cell membrane. Functions in endosome to Golgi retrograde transport. In response to calcium influx, may interact with SNARE fusion receptors and membrane phospholipids to mediate endosome fusion with the trans-Golgi network. By promoting the recycling of secretory vesicle transmembrane proteins, it indirectly controls dense-core secretory vesicle biogenesis, maturation and their ability to mediate the constitutive and regulated secretion of neurotransmitters and hormones. May regulate behavior and food intake by controlling calcium-stimulated exocytosis of neurotransmitters including NPY and serotonin and hormones like insulin. Proposed to play a role in hypothalamic neuronal firing by modulating gamma-aminobutyric acid (GABA)ergic inhibitory neurotransmission. The sequence is that of BAI1-associated protein 3 from Homo sapiens (Human).